The following is a 126-amino-acid chain: Large ribosomal subunit protein bL19 (126 aa).

Belongs to the bacterial ribosomal protein bL19 family.

Functionally, this protein is located at the 30S-50S ribosomal subunit interface and may play a role in the structure and function of the aminoacyl-tRNA binding site. The sequence is that of Large ribosomal subunit protein bL19 from Gluconacetobacter diazotrophicus (strain ATCC 49037 / DSM 5601 / CCUG 37298 / CIP 103539 / LMG 7603 / PAl5).